The chain runs to 235 residues: Small ribosomal subunit protein uS2 (235 aa).

The protein belongs to the universal ribosomal protein uS2 family.

The sequence is that of Small ribosomal subunit protein uS2 (rpsB) from Geobacillus stearothermophilus (Bacillus stearothermophilus).